Reading from the N-terminus, the 317-residue chain is Protein PXR1 (317 aa).

In terms of domain architecture, G-patch spans 25–79; the sequence is TTGYGHRIMSAQGWTPGAFLGAPGAAHSSCYTAASASHIRVVLKDDTLGLGARPR. Residues 152–268 are disordered; the sequence is EQANKDDSSD…PNKQSAQQST (117 aa). A compositionally biased stretch (basic and acidic residues) spans 154–170; the sequence is ANKDDSSDPKSRQETTQ. Residues 171–182 show a composition bias toward basic residues; it reads KRPKKEKRKEKS. Positions 192–219 are enriched in polar residues; the sequence is RSISSKPERGTINSANQTSDDESTNIVP. The segment covering 224-236 has biased composition (basic residues); sequence SRKKEKKKKSKKR.

Belongs to the PINX1 family.

The protein localises to the nucleus. It localises to the nucleolus. Involved in rRNA-processing at A0, A1 and A2 sites and negatively regulates telomerase. This is Protein PXR1 (PXR1) from Coccidioides immitis (strain RS) (Valley fever fungus).